We begin with the raw amino-acid sequence, 261 residues long: Carnitinyl-CoA dehydratase (261 aa).

The active-site Nucleophile is the Glu111. Glu131 functions as the Proton acceptor in the catalytic mechanism.

Belongs to the enoyl-CoA hydratase/isomerase family.

It catalyses the reaction (R)-carnitinyl-CoA = crotonobetainyl-CoA + H2O. It participates in amine and polyamine metabolism; carnitine metabolism. Its function is as follows. Catalyzes the reversible dehydration of L-carnitinyl-CoA to crotonobetainyl-CoA. This is Carnitinyl-CoA dehydratase from Salmonella enteritidis PT4 (strain P125109).